The primary structure comprises 262 residues: Acyl-[acyl-carrier-protein]--UDP-N-acetylglucosamine O-acyltransferase (262 aa).

Belongs to the transferase hexapeptide repeat family. LpxA subfamily. Homotrimer.

Its subcellular location is the cytoplasm. It catalyses the reaction a (3R)-hydroxyacyl-[ACP] + UDP-N-acetyl-alpha-D-glucosamine = a UDP-3-O-[(3R)-3-hydroxyacyl]-N-acetyl-alpha-D-glucosamine + holo-[ACP]. The protein operates within glycolipid biosynthesis; lipid IV(A) biosynthesis; lipid IV(A) from (3R)-3-hydroxytetradecanoyl-[acyl-carrier-protein] and UDP-N-acetyl-alpha-D-glucosamine: step 1/6. Involved in the biosynthesis of lipid A, a phosphorylated glycolipid that anchors the lipopolysaccharide to the outer membrane of the cell. The sequence is that of Acyl-[acyl-carrier-protein]--UDP-N-acetylglucosamine O-acyltransferase from Blochmanniella floridana.